The following is a 193-amino-acid chain: MKIYQIDSSARKEGSSSRALAKKLLNKIKKPGDEVIYRDLDDDMLFVSGLTESGMKIAEKDQTEEHKKMFELSDKLVSELKESDIIIISAPIYNYGPPATLKAWCDLAARIGETFKFKPNGRREGLLKNKQAYLVITSGGTKLNSSEDFLTPWLKFILNFFGIEKVEVISADQMALDYEKSIKEAEKQIENII.

FMN is bound by residues Ser9, 15-17, and 137-140; these read SSS and TSGG.

The protein belongs to the azoreductase type 1 family. As to quaternary structure, homodimer. FMN serves as cofactor.

The catalysed reaction is 2 a quinone + NADH + H(+) = 2 a 1,4-benzosemiquinone + NAD(+). It catalyses the reaction N,N-dimethyl-1,4-phenylenediamine + anthranilate + 2 NAD(+) = 2-(4-dimethylaminophenyl)diazenylbenzoate + 2 NADH + 2 H(+). Quinone reductase that provides resistance to thiol-specific stress caused by electrophilic quinones. Functionally, also exhibits azoreductase activity. Catalyzes the reductive cleavage of the azo bond in aromatic azo compounds to the corresponding amines. The polypeptide is FMN-dependent NADH:quinone oxidoreductase (Pelagibacter ubique (strain HTCC1062)).